The chain runs to 302 residues: tRNA pseudouridine synthase B (302 aa).

D48 acts as the Nucleophile in catalysis.

This sequence belongs to the pseudouridine synthase TruB family. Type 1 subfamily.

It catalyses the reaction uridine(55) in tRNA = pseudouridine(55) in tRNA. Its function is as follows. Responsible for synthesis of pseudouridine from uracil-55 in the psi GC loop of transfer RNAs. This chain is tRNA pseudouridine synthase B, found in Xylella fastidiosa (strain Temecula1 / ATCC 700964).